We begin with the raw amino-acid sequence, 2322 residues long: Chondroitin sulfate proteoglycan 4 (2322 aa).

An N-terminal signal peptide occupies residues 1-29; sequence MQSGPRPPLPAPGLALALTLTMLARLASA. 2 Laminin G-like domains span residues 30–192 and 202–380; these read ASFF…HEGC and VALG…AAGC. The globular or compact configuration stabilized by disulfide bonds stretch occupies residues 30–639; that stretch reads ASFFGENHLE…HRGGPAQDLT (610 aa). Positions 30–639 are neurite growth inhibition; it reads ASFFGENHLE…HRGGPAQDLT (610 aa). The Extracellular portion of the chain corresponds to 30–2224; it reads ASFFGENHLE…LSFLEANMFS (2195 aa). N-linked (GlcNAc...) asparagine glycosylation is present at asparagine 130. Cysteine 169 and cysteine 192 are joined by a disulfide. Residue asparagine 348 is glycosylated (N-linked (GlcNAc...) asparagine). Cysteine 354 and cysteine 380 are disulfide-bonded. An N-linked (GlcNAc...) asparagine glycan is attached at asparagine 427. 3 CSPG repeats span residues 428–523, 553–645, and 662–764; these read FTQL…LEVS, PHII…VSDG, and AIQI…LEVQ. The interaction with COL6A2 stretch occupies residues 574–1040; that stretch reads GPEVFQAYDP…RGGRRLLTTD (467 aa). An interaction with COL5A1 region spans residues 631–1446; it reads RGGPAQDLTF…SETLTDSFVL (816 aa). 2 N-linked (GlcNAc...) asparagine glycosylation sites follow: asparagine 685 and asparagine 772. CSPG repeat units follow at residues 783–878 and 898–989; these read TVWM…FRVT and DAPV…FVAT. A glycan (O-linked (Xyl...) (chondroitin sulfate) serine) is linked at serine 995. CSPG repeat units lie at residues 1018–1110, 1126–1216, 1238–1337, 1356–1449, 1473–1563, 1581–1679, 1704–1803, 1832–1924, and 1941–2029; these read APVQ…VSDG, YLRV…FSVE, PLKL…LDVA, AAIP…LMAN, PPIL…LSDG, LLSL…LQLS, PSHL…FRAH, PPQP…MSDG, and AIEV…VLAL. N-linked (GlcNAc...) asparagine glycosylation is found at asparagine 1131 and asparagine 1202. N-linked (GlcNAc...) asparagine glycosylation is found at asparagine 1364 and asparagine 1449. Residues 1586-2221 form a neurite growth inhibition region; that stretch reads GSQTLTVCPG…GGFLSFLEAN (636 aa). The tract at residues 1587 to 2221 is cysteine-containing; the sequence is SQTLTVCPGS…GGFLSFLEAN (635 aa). An N-linked (GlcNAc...) asparagine glycan is attached at asparagine 1645. N-linked (GlcNAc...) asparagine glycans are attached at residues asparagine 1909, asparagine 2016, asparagine 2034, asparagine 2040, and asparagine 2075. The CSPG 15 repeat unit spans residues 2038–2147; it reads VVNVTVRALL…AGDSLTLELW (110 aa). The interval 2182 to 2206 is disordered; that stretch reads ARTEAGKPESSTPTGEPGPMASSPE. The helical transmembrane segment at 2225-2245 threads the bilayer; the sequence is VIIPMCLVLLLLALILPLLFY. Topologically, residues 2246–2322 are cytoplasmic; the sequence is LRKRNKTGKH…PALKNGQYWV (77 aa). At threonine 2252 the chain carries Phosphothreonine; by PKC/PRKCA. Residues 2320-2322 carry the PDZ-binding motif; sequence YWV.

In terms of assembly, interacts with the first PDZ domain of MPDZ. Interacts with PRKCA. Binds TNC, laminin-1, COL5A1 and COL6A2. Interacts with PLG and angiostatin. Binds FGF2 and PDGFA. Interacts with GRIP1, GRIP2 and GRIA2. Forms a ternary complex with GRIP1 and GRIA2. Interacts with LGALS3 and the integrin composed of ITGB1 and ITGA3. Interacts with ITGA4 through its chondroitin sulfate glycosaminoglycan. Interacts with BCAR1, CDC42 and ACK1. Interacts with MMP16. (Microbial infection) Interacts with C.difficile toxin TcdB, suggesting that it may act as a receptor for TcdB. In terms of processing, O-glycosylated; contains glycosaminoglycan chondroitin sulfate which are required for proper localization and function in stress fiber formation. Involved in interaction with MMP16 and ITGA4. Phosphorylation by PRKCA regulates its subcellular location and function in cell motility. As to expression, detected in fibroblasts (at protein level). Detected in placenta (at protein level). Detected in malignant melanoma cells.

Its subcellular location is the cell membrane. It is found in the apical cell membrane. The protein resides in the cell projection. The protein localises to the lamellipodium membrane. It localises to the cell surface. Functionally, proteoglycan playing a role in cell proliferation and migration which stimulates endothelial cells motility during microvascular morphogenesis. May also inhibit neurite outgrowth and growth cone collapse during axon regeneration. Cell surface receptor for collagen alpha 2(VI) which may confer cells ability to migrate on that substrate. Binds through its extracellular N-terminus growth factors, extracellular matrix proteases modulating their activity. May regulate MPP16-dependent degradation and invasion of type I collagen participating in melanoma cells invasion properties. May modulate the plasminogen system by enhancing plasminogen activation and inhibiting angiostatin. Also functions as a signal transducing protein by binding through its cytoplasmic C-terminus scaffolding and signaling proteins. May promote retraction fiber formation and cell polarization through Rho GTPase activation. May stimulate alpha-4, beta-1 integrin-mediated adhesion and spreading by recruiting and activating a signaling cascade through CDC42, ACK1 and BCAR1. May activate FAK and ERK1/ERK2 signaling cascades. This Homo sapiens (Human) protein is Chondroitin sulfate proteoglycan 4 (CSPG4).